The primary structure comprises 78 residues: Protein GPR15LG (78 aa).

The signal sequence occupies residues 1–24 (MRLLALSGLLCMLLLCFCIFSSEG). 2 cysteine pairs are disulfide-bonded: Cys-37/Cys-60 and Cys-38/Cys-57.

Interacts with SUSD2; the interaction is direct. As to expression, highly abundant in the testis, colon, eye, and tongue. Detected in the epithelial layer of the colon, but not the small intestine.

It is found in the secreted. Its function is as follows. Highly cationic protein that has multiple functions. Acts as a chemotactic factor that mediates lymphocytes recruitment to epithelia through binding and activation of the G-protein coupled receptor GPR15. May be a tumor suppressor; together with SUSD2 has a growth inhibitory effect on colon cancer cells which includes G1 cell cycle arrest. May regulate keratinocyte proliferation. In addition, through activation of Mas-related G protein-coupled receptors (MRGPRs) contributes to pruritogenesis by activating itch-selective sensory neurons and mast cells degranulation. In terms of biological role, has antimicrobial activity against Gram-positive bacteria, including Staphylococcus aureus and Actinomyces spec., and Mycoplasma hominis and lentivirus. The polypeptide is Protein GPR15LG (Gpr15lg) (Mus musculus (Mouse)).